The sequence spans 108 residues: Movement protein (108 aa).

The tract at residues 1 to 25 (MDASSQYSALPYPQPPRVPSAAPSA) is disordered. Residues 35–55 (EIVIFTFVSVLALYLLWLWVL) traverse the membrane as a helical segment. The interval 73–108 (LIFGPGERPPVASADGSRPVPDPSPPVRRDLDLSRV) is disordered. A compositionally biased stretch (basic and acidic residues) spans 99–108 (VRRDLDLSRV).

It belongs to the mastrevirus movement protein family. Interacts with the capsid protein (CP). Part of a MP-CP-viral DNA complex.

The protein localises to the host membrane. Functionally, involved in the viral transport within, and between cells. The protein is Movement protein of Megathyrsus maximus (PanSV).